The sequence spans 155 residues: Small ribosomal subunit protein bS6 (155 aa).

Residues 94 to 155 (VKQEGPLPTP…TPELEEQVKS (62 aa)) form a disordered region. Residues 103–112 (PRSSNKSSNQ) show a composition bias toward polar residues. The span at 113-141 (AEKKENENIDSANKSEPKADETDNKKKIT) shows a compositional bias: basic and acidic residues.

The protein belongs to the bacterial ribosomal protein bS6 family.

Functionally, binds together with bS18 to 16S ribosomal RNA. In Prochlorococcus marinus (strain MIT 9515), this protein is Small ribosomal subunit protein bS6.